A 111-amino-acid polypeptide reads, in one-letter code: Large ribosomal subunit protein eL31 (111 aa).

It belongs to the eukaryotic ribosomal protein eL31 family.

The protein is Large ribosomal subunit protein eL31 (RPL31) of Tetrahymena thermophila (strain SB210).